Here is a 182-residue protein sequence, read N- to C-terminus: Ribosome maturation factor RimM (182 aa).

In terms of domain architecture, PRC barrel spans 102–182 (EEGDYYWKDL…TIEVDWDPGF (81 aa)).

This sequence belongs to the RimM family. In terms of assembly, binds ribosomal protein uS19.

The protein localises to the cytoplasm. In terms of biological role, an accessory protein needed during the final step in the assembly of 30S ribosomal subunit, possibly for assembly of the head region. Essential for efficient processing of 16S rRNA. May be needed both before and after RbfA during the maturation of 16S rRNA. It has affinity for free ribosomal 30S subunits but not for 70S ribosomes. The protein is Ribosome maturation factor RimM of Klebsiella pneumoniae (strain 342).